We begin with the raw amino-acid sequence, 193 residues long: dTTP/UTP pyrophosphatase (193 aa).

Residue Asp77 is the Proton acceptor of the active site.

This sequence belongs to the Maf family. YhdE subfamily. A divalent metal cation serves as cofactor.

Its subcellular location is the cytoplasm. It carries out the reaction dTTP + H2O = dTMP + diphosphate + H(+). The enzyme catalyses UTP + H2O = UMP + diphosphate + H(+). Its function is as follows. Nucleoside triphosphate pyrophosphatase that hydrolyzes dTTP and UTP. May have a dual role in cell division arrest and in preventing the incorporation of modified nucleotides into cellular nucleic acids. The protein is dTTP/UTP pyrophosphatase of Bacteroides fragilis (strain YCH46).